Consider the following 67-residue polypeptide: DNA-directed RNA polymerase subunit omega (67 aa).

The protein belongs to the RNA polymerase subunit omega family. In terms of assembly, the RNAP catalytic core consists of 2 alpha, 1 beta, 1 beta' and 1 omega subunit. When a sigma factor is associated with the core the holoenzyme is formed, which can initiate transcription.

It carries out the reaction RNA(n) + a ribonucleoside 5'-triphosphate = RNA(n+1) + diphosphate. Functionally, promotes RNA polymerase assembly. Latches the N- and C-terminal regions of the beta' subunit thereby facilitating its interaction with the beta and alpha subunits. In Polaromonas sp. (strain JS666 / ATCC BAA-500), this protein is DNA-directed RNA polymerase subunit omega.